A 277-amino-acid polypeptide reads, in one-letter code: Undecaprenyl-diphosphatase (277 aa).

The next 7 helical transmembrane spans lie at 3–23 (IALLIKAAIMGVVEGLTEFLP), 44–64 (AKVFDIAIQTGAIFAVILVYW), 82–102 (QFALNVLVAFVPAVVLGLLFG), 109–129 (LFTPVVVASTFVIGGFIILWA), 188–208 (ATDFSFYLAIPTLIGAGVYSL), 218–238 (ADVPLFMVGLVFSFVSAWLCI), and 249–269 (SFIPFAWYRIAFGVVVLATAW).

This sequence belongs to the UppP family.

It is found in the cell inner membrane. The catalysed reaction is di-trans,octa-cis-undecaprenyl diphosphate + H2O = di-trans,octa-cis-undecaprenyl phosphate + phosphate + H(+). Catalyzes the dephosphorylation of undecaprenyl diphosphate (UPP). Confers resistance to bacitracin. This is Undecaprenyl-diphosphatase from Polaromonas sp. (strain JS666 / ATCC BAA-500).